The sequence spans 474 residues: Cysteine--tRNA ligase (474 aa).

A Zn(2+)-binding site is contributed by Cys29. Residues 31 to 41 (ATVQGEPHVGH) carry the 'HIGH' region motif. Residues Cys211, His236, and Glu240 each coordinate Zn(2+). Residues 267–271 (KMSKS) carry the 'KMSKS' region motif. Residue Lys270 participates in ATP binding.

Belongs to the class-I aminoacyl-tRNA synthetase family. Monomer. Zn(2+) is required as a cofactor.

It localises to the cytoplasm. It catalyses the reaction tRNA(Cys) + L-cysteine + ATP = L-cysteinyl-tRNA(Cys) + AMP + diphosphate. This Beutenbergia cavernae (strain ATCC BAA-8 / DSM 12333 / CCUG 43141 / JCM 11478 / NBRC 16432 / NCIMB 13614 / HKI 0122) protein is Cysteine--tRNA ligase.